Reading from the N-terminus, the 1735-residue chain is Cadherin-AgCad1 (1735 aa).

The signal sequence occupies residues 1-30 (MKCVASKFNMWLHLGWLLGLLLVLLPLVRC). At 31–1574 (QGWGEPRFET…ALTEADETLQ (1544 aa)) the chain is on the extracellular side. The extracellular domain (EC) stretch occupies residues 166 to 1456 (VTDCLFNVYH…KVYIVSESNR (1291 aa)). Cadherin domains follow at residues 171–273 (FNVY…PPIF), 280–378 (ERIM…IPEI), 379–498 (YMKP…VPKF), 499–620 (GRDE…PPQI), 621–757 (TLPR…APYF), 767–866 (SVKE…QPYH), 879–983 (EKIP…TPKL), 985–1109 (ELAA…TPSI), 1136–1235 (GSPL…EPTF), 1255–1350 (AEDP…PPVF), and 1351–1461 (QQRL…TFVF). 2 short sequence motifs (toxin-binding receptor motif) span residues 1344–1350 (NDNPPVF) and 1446–1456 (AKVYIVSESNR). A CR11-MPED, increases toxicity of activated Cry4B toxin, peptide alone is not toxic region spans residues 1358–1569 (GITTNDRVPK…PLATEALTEA (212 aa)). Residues 1457 to 1569 (VTFVFLNSVE…PLATEALTEA (113 aa)) are membrane-proximal EC domain (MPED). Residues 1575–1595 (IILIVVSAALAVLCVILFVAF) traverse the membrane as a helical segment. At 1596–1735 (FIKIRSLNRQ…ETDDELSHRF (140 aa)) the chain is on the cytoplasmic side. Residues 1701–1719 (SLNPMANGTDKSNDGAPTS) show a composition bias toward polar residues. Residues 1701–1735 (SLNPMANGTDKSNDGAPTSNHKKLDETDDELSHRF) are disordered. The span at 1722-1735 (KKLDETDDELSHRF) shows a compositional bias: basic and acidic residues.

In terms of tissue distribution, larval midgut (at protein level).

The protein resides in the apical cell membrane. The protein localises to the cell projection. It is found in the microvillus membrane. Functionally, cadherins are calcium-dependent cell adhesion proteins. They preferentially interact with themselves in a homophilic manner in connecting cells. Its function is as follows. (Microbial infection) Binds to and is probably the functional receptor for B.thuringiensis subsp. israelensis (Bti) insecticidal toxin Cry4B. Trichoplusia ni insect cells stably transfected with this protein become suspectible to Cry4B; cells undergo oncosis, they bleb and ruffle after 20-40 minutes, swell after 40-60 minutes and lyse after 90 minutes. Following toxin treatment in the T.in insect system levels of intracellular 3',5'-cyclic AMP (cAMP) rise 12.5-fold; EDTA but not EGTA pretreatment prevents cAMP increase. Inorganic phosphate also rises 3.4-fold after toxin treatment. The protein is Cadherin-AgCad1 of Anopheles gambiae (African malaria mosquito).